The primary structure comprises 543 residues: Carboxypeptidase Y homolog A (543 aa).

Residues 1 to 17 form the signal peptide; sequence MRVLPATLLVGAATAAA. The propeptide occupies 18–124; it reads PPFQQILGLP…KLEAYDLRVK (107 aa). Intrachain disulfides connect C179–C419, C313–C327, C337–C360, C344–C353, and C382–C389. N210 carries N-linked (GlcNAc...) asparagine glycosylation. S266 is an active-site residue. The active site involves D458. N509 is a glycosylation site (N-linked (GlcNAc...) asparagine). H520 is a catalytic residue.

It belongs to the peptidase S10 family.

It localises to the vacuole. It carries out the reaction Release of a C-terminal amino acid with broad specificity.. Its function is as follows. Vacuolar carboxypeptidase involved in degradation of small peptides. Digests preferentially peptides containing an aliphatic or hydrophobic residue in P1' position, as well as methionine, leucine or phenylalanine in P1 position of ester substrate. In Neosartorya fischeri (strain ATCC 1020 / DSM 3700 / CBS 544.65 / FGSC A1164 / JCM 1740 / NRRL 181 / WB 181) (Aspergillus fischerianus), this protein is Carboxypeptidase Y homolog A (cpyA).